Reading from the N-terminus, the 237-residue chain is Lectin alpha chain (237 aa).

The Mn(2+) site is built by Glu8 and Asp10. Residues Asp10, Tyr12, Asn14, and Asp19 each coordinate Ca(2+). Tyr12 serves as a coordination point for a carbohydrate. Positions 19 and 24 each coordinate Mn(2+). Residue 99-100 (LY) participates in a carbohydrate binding. A Ca(2+)-binding site is contributed by Asp208. Arg228 contacts a carbohydrate.

Belongs to the leguminous lectin family. As to quaternary structure, equilibrium between homodimer and homotetramer. Oligomerization is pH-dependent with homotetramers forming at pH 6.5 and above. In terms of processing, the beta and gamma chains are produced by partial proteolytic processing of the lectin alpha chain by an asparaginyl endopeptidase. Mixture of 60% alpha lectin and 40% of its beta and gamma proteolytic fragments. In terms of tissue distribution, seed.

The protein localises to the vacuole. It localises to the aleurone grain. D-mannose/D-glucose-binding lectin. Has anti-inflammatory activity in rats. Induces histamine release in mast cells from hamster and rat. Induces lymphocyte proliferation and IFNG production. Shows toxicity against the aquatic snail B.glabrata at concentrations higher than 20 ug/ml. This is Lectin alpha chain from Dioclea virgata.